The sequence spans 199 residues: Superoxide dismutase [Mn] (199 aa).

Mn(2+) contacts are provided by His27, His76, Asp160, and His164.

It belongs to the iron/manganese superoxide dismutase family. It depends on Mn(2+) as a cofactor.

It carries out the reaction 2 superoxide + 2 H(+) = H2O2 + O2. Destroys superoxide anion radicals which are normally produced within the cells and which are toxic to biological systems. In Corynebacterium diphtheriae (strain ATCC 700971 / NCTC 13129 / Biotype gravis), this protein is Superoxide dismutase [Mn] (sodA).